The primary structure comprises 116 residues: Large ribosomal subunit protein uL18 (116 aa).

Belongs to the universal ribosomal protein uL18 family. In terms of assembly, part of the 50S ribosomal subunit; part of the 5S rRNA/L5/L18/L25 subcomplex. Contacts the 5S and 23S rRNAs.

Functionally, this is one of the proteins that bind and probably mediate the attachment of the 5S RNA into the large ribosomal subunit, where it forms part of the central protuberance. The polypeptide is Large ribosomal subunit protein uL18 (Exiguobacterium sibiricum (strain DSM 17290 / CCUG 55495 / CIP 109462 / JCM 13490 / 255-15)).